We begin with the raw amino-acid sequence, 365 residues long: tRNA/tmRNA (uracil-C(5))-methyltransferase (365 aa).

S-adenosyl-L-methionine is bound by residues Q189, Y217, N222, E238, and D298. Residue C323 is the Nucleophile of the active site. The Proton acceptor role is filled by E357.

Belongs to the class I-like SAM-binding methyltransferase superfamily. RNA M5U methyltransferase family. TrmA subfamily.

The catalysed reaction is uridine(54) in tRNA + S-adenosyl-L-methionine = 5-methyluridine(54) in tRNA + S-adenosyl-L-homocysteine + H(+). The enzyme catalyses uridine(341) in tmRNA + S-adenosyl-L-methionine = 5-methyluridine(341) in tmRNA + S-adenosyl-L-homocysteine + H(+). Dual-specificity methyltransferase that catalyzes the formation of 5-methyluridine at position 54 (m5U54) in all tRNAs, and that of position 341 (m5U341) in tmRNA (transfer-mRNA). The protein is tRNA/tmRNA (uracil-C(5))-methyltransferase of Shewanella loihica (strain ATCC BAA-1088 / PV-4).